The primary structure comprises 367 residues: CCN family member 4 (367 aa).

Residues methionine 1–alanine 22 form the signal peptide. Residues arginine 45–valine 118 form the IGFBP N-terminal domain. 4 disulfides stabilise this stretch: cysteine 49-cysteine 73, cysteine 53-cysteine 75, cysteine 55-cysteine 76, and cysteine 62-cysteine 79. N-linked (GlcNAc...) asparagine glycosylation is present at asparagine 86. Disulfide bonds link cysteine 87-cysteine 101 and cysteine 93-cysteine 115. The 66-residue stretch at valine 121–glutamate 186 folds into the VWFC domain. The N-linked (GlcNAc...) asparagine glycan is linked to asparagine 143. The TSP type-1 domain maps to asparagine 215 to aspartate 260. Intrachain disulfides connect cysteine 273–cysteine 310, cysteine 290–cysteine 324, cysteine 301–cysteine 340, cysteine 304–cysteine 342, and cysteine 309–cysteine 346. The region spanning cysteine 273–arginine 347 is the CTCK domain. N-linked (GlcNAc...) asparagine glycosylation occurs at asparagine 284. N-linked (GlcNAc...) asparagine glycosylation is present at asparagine 343.

This sequence belongs to the CCN family. As to expression, expressed in heart, kidney, lung, pancreas, placenta, ovary, small intestine and spleen. Isoform 2 is expressed predominantly in scirrhous gastric carcinoma and, weakly in placenta. Overexpression is associated with several cancers including breast cancer and colon tumors. Isoform 2 is overexpressed in scirrhous gastric carcinoma.

The protein resides in the secreted. Downstream regulator in the Wnt/Frizzled-signaling pathway. Associated with cell survival. Attenuates p53-mediated apoptosis in response to DNA damage through activation of AKT kinase. Up-regulates the anti-apoptotic Bcl-X(L) protein. Adheres to skin and melanoma fibroblasts. In vitro binding to skin fibroblasts occurs through the proteoglycans, decorin and biglycan. This is CCN family member 4 from Homo sapiens (Human).